The following is a 215-amino-acid chain: UPF0502 protein YceH (215 aa).

An N6-acetyllysine modification is found at Lys-80.

This sequence belongs to the UPF0502 family.

The sequence is that of UPF0502 protein YceH from Escherichia coli O45:K1 (strain S88 / ExPEC).